Consider the following 449-residue polypeptide: C4-dicarboxylate transport protein (449 aa).

8 helical membrane-spanning segments follow: residues 18 to 38, 61 to 81, 93 to 113, 159 to 179, 202 to 222, 244 to 264, 311 to 331, and 369 to 389; these read PFYL…ALLG, MIIS…VAHV, VYFL…AHVV, FVGD…IALA, LVQM…AFTI, SLLF…FSIL, GYSF…LFIA, and AATL…ILGV.

It belongs to the dicarboxylate/amino acid:cation symporter (DAACS) (TC 2.A.23) family.

It localises to the cell inner membrane. In terms of biological role, responsible for the transport of dicarboxylates such as succinate, fumarate, and malate from the periplasm across the membrane. The protein is C4-dicarboxylate transport protein of Xylella fastidiosa (strain M12).